We begin with the raw amino-acid sequence, 467 residues long: GTPase Der (467 aa).

EngA-type G domains follow at residues 25–188 (PVVA…PEAP) and 199–372 (RRVA…ASWE). GTP contacts are provided by residues 31–38 (GRPNVGKS), 78–82 (DTGGW), 140–143 (NKAD), 205–212 (GRPNVGKS), 252–256 (DTAGL), and 317–320 (NKWD). A KH-like domain is found at 373 to 455 (TRVPTAQLNA…PIEIAVRPRK (83 aa)).

Belongs to the TRAFAC class TrmE-Era-EngA-EngB-Septin-like GTPase superfamily. EngA (Der) GTPase family. As to quaternary structure, associates with the 50S ribosomal subunit.

In terms of biological role, GTPase that plays an essential role in the late steps of ribosome biogenesis. In Salinispora arenicola (strain CNS-205), this protein is GTPase Der.